Reading from the N-terminus, the 398-residue chain is uncharacterized protein (398 aa).

An N-terminal signal peptide occupies residues 1–22 (MKLKFYKLPLITTAFSFVFLTA). The N-palmitoyl cysteine moiety is linked to residue C23. C23 is lipidated: S-diacylglycerol cysteine.

The protein localises to the cell membrane. This is an uncharacterized protein from Mycoplasma genitalium (strain ATCC 33530 / DSM 19775 / NCTC 10195 / G37) (Mycoplasmoides genitalium).